The sequence spans 120 residues: MEWKVVDTVISPSTGVSFSCIHSLKNLRLTLWYQADVYMPPGSIIIPFNKGVLINDKLYPVTVYNVTRFNPVLWKSLKENSHCPGNCNPKSEACSYPFECLVSVCPFGLTRNIQIDNKKV.

Belongs to the IraM/RssC family.

The protein localises to the cytoplasm. Functionally, involved in the stabilization of the sigma stress factor RpoS. The protein is Anti-adapter protein IraM of Salmonella typhimurium (strain LT2 / SGSC1412 / ATCC 700720).